A 224-amino-acid chain; its full sequence is 7-cyano-7-deazaguanine synthase 1 (224 aa).

Residue 10–20 (LSGGLDSMVCA) participates in ATP binding. Cysteine 189, cysteine 199, cysteine 202, and cysteine 205 together coordinate Zn(2+).

It belongs to the QueC family. Zn(2+) is required as a cofactor.

It carries out the reaction 7-carboxy-7-deazaguanine + NH4(+) + ATP = 7-cyano-7-deazaguanine + ADP + phosphate + H2O + H(+). It participates in purine metabolism; 7-cyano-7-deazaguanine biosynthesis. Its function is as follows. Catalyzes the ATP-dependent conversion of 7-carboxy-7-deazaguanine (CDG) to 7-cyano-7-deazaguanine (preQ(0)). The protein is 7-cyano-7-deazaguanine synthase 1 of Sphingopyxis alaskensis (strain DSM 13593 / LMG 18877 / RB2256) (Sphingomonas alaskensis).